Here is a 221-residue protein sequence, read N- to C-terminus: MLQMNLEELRRIQEEMSRSVVLEDLIPLEELEYVVGVDQAFISDEVVSCAVKLTFPELEVVDKAVRVEKVTFPYIPTFLMFREGEPAVNAVKGLVDDRAAIMVDGSGIAHPRRCGLATYIALKLRKPTVGITKKRLFGEMVEVEDGLWRLLDGSETIGYALKSCRRCKPIFISPGSYISPDSALELTRKCLKGYKLPEPIRIADKLTKEVKRELTPTSKLK.

Residues aspartate 38 and aspartate 104 each coordinate Mg(2+).

This sequence belongs to the endonuclease V family. Mg(2+) is required as a cofactor.

The protein localises to the cytoplasm. It carries out the reaction Endonucleolytic cleavage at apurinic or apyrimidinic sites to products with a 5'-phosphate.. In terms of biological role, DNA repair enzyme involved in the repair of deaminated bases. Selectively cleaves double-stranded DNA at the second phosphodiester bond 3' to a deoxyinosine leaving behind the intact lesion on the nicked DNA. Recognizes only deoxyinosine. This Archaeoglobus fulgidus (strain ATCC 49558 / DSM 4304 / JCM 9628 / NBRC 100126 / VC-16) protein is Endonuclease V.